We begin with the raw amino-acid sequence, 147 residues long: Myoglobin (147 aa).

The region spanning alanine 2 to lysine 141 is the Globin domain. Residue histidine 60 coordinates nitrite. Histidine 60 contributes to the O2 binding site. Histidine 89 is a heme b binding site.

This sequence belongs to the globin family. Monomeric.

The protein resides in the cytoplasm. It localises to the sarcoplasm. It catalyses the reaction Fe(III)-heme b-[protein] + nitric oxide + H2O = Fe(II)-heme b-[protein] + nitrite + 2 H(+). The enzyme catalyses H2O2 + AH2 = A + 2 H2O. In terms of biological role, monomeric heme protein which primary function is to store oxygen and facilitate its diffusion within muscle tissues. Reversibly binds oxygen through a pentacoordinated heme iron and enables its timely and efficient release as needed during periods of heightened demand. Depending on the oxidative conditions of tissues and cells, and in addition to its ability to bind oxygen, it also has a nitrite reductase activity whereby it regulates the production of bioactive nitric oxide. Under stress conditions, like hypoxia and anoxia, it also protects cells against reactive oxygen species thanks to its pseudoperoxidase activity. The sequence is that of Myoglobin (mb) from Gobionotothen gibberifrons (Humped rockcod).